Consider the following 30-residue polypeptide: Nattererin-2 (30 aa).

In terms of tissue distribution, expressed by the skin glands.

The protein localises to the secreted. Its function is as follows. Probably has antibacterial activity. The protein is Nattererin-2 of Physalaemus nattereri (Cuyaba dwarf frog).